Consider the following 460-residue polypeptide: Mogroside I-E synthase (460 aa).

The Proton acceptor role is filled by His25. Catalysis depends on Asp114, which acts as the Charge relay. Positions 286, 339, 341, 359, 360, 361, 364, 380, and 381 each coordinate UDP-alpha-D-glucose.

This sequence belongs to the UDP-glycosyltransferase family. Highly expressed in young fruits 15 days after anthesis (15-DAA).

It carries out the reaction mogrol + UDP-alpha-D-glucose = mogroside IE + UDP + H(+). The catalysed reaction is mogroside I-A1 + UDP-alpha-D-glucose = mogroside IIE + UDP + H(+). It catalyses the reaction mogroside II-A1 + UDP-alpha-D-glucose = mogroside IIIX + UDP + H(+). The enzyme catalyses mogroside II-A + UDP-alpha-D-glucose = mogroside III + UDP + H(+). It carries out the reaction mogroside III-A1 + UDP-alpha-D-glucose = siamenoside I + UDP + H(+). It participates in secondary metabolite biosynthesis; terpenoid biosynthesis. In terms of biological role, UDP-glycosyltransferase involved in the biosynthesis of cucurbitacin and mogroside tetracyclic triterpene natural products (e.g. siamenoside I and mogrosides IV, V and VI). Cucurbitacins have cytotoxic properties and exhibit deterrent taste as a defense barrier against herbivores. Mogrosides are nonsugar highly oxygenated compounds used as high-intensity zero-calorie sweeteners; they also possess pharmacological properties such as regulating immunity, lowering blood sugar and lipid levels, protecting the liver, and acting as antioxidants and antitumor agents. Catalyzes the C3 primary glucosylation of mogrol, mogroside I-A1, mogroside II-A1, mogroside II-A and mogroside III-A1. The protein is Mogroside I-E synthase of Siraitia grosvenorii (Monk's fruit).